The primary structure comprises 111 residues: MNHYLLLLFVIFLTCAGQLSQKQATHSWKENAKRQTLIWLGLSVIFLAGGMLLWLKLLQYLPLSQAYPFLSINLILVTLSGHFFFKEKVTLQHWLGIGIMMVGILLLGQGI.

The next 3 membrane-spanning stretches (helical) occupy residues 37-57, 65-85, and 91-111; these read LIWL…WLKL, QAYP…HFFF, and LQHW…GQGI.

It belongs to the ArnE family. As to quaternary structure, heterodimer of ArnE and ArnF.

The protein resides in the cell inner membrane. The protein operates within bacterial outer membrane biogenesis; lipopolysaccharide biosynthesis. Its function is as follows. Translocates 4-amino-4-deoxy-L-arabinose-phosphoundecaprenol (alpha-L-Ara4N-phosphoundecaprenol) from the cytoplasmic to the periplasmic side of the inner membrane. This is Probable 4-amino-4-deoxy-L-arabinose-phosphoundecaprenol flippase subunit ArnE from Hamiltonella defensa subsp. Acyrthosiphon pisum (strain 5AT).